The following is a 353-amino-acid chain: Phospho-furanose lactonase (353 aa).

H24, H26, K153, H186, and H214 together coordinate Zn(2+). K153 carries the post-translational modification N6-carboxylysine. Residue 244–245 coordinates substrate; sequence KY. D272 lines the Zn(2+) pocket. 275–278 contacts substrate; it reads RILY.

The protein belongs to the metallo-dependent hydrolases superfamily. Phosphotriesterase family. It depends on Zn(2+) as a cofactor.

It carries out the reaction a 1,4-lactone + H2O = a 4-hydroxyacid + H(+). The enzyme catalyses D-xylono-1,4-lactone 5-phosphate + H2O = 5-phospho-D-xylonate + H(+). The catalysed reaction is L-arabino-1,4-lactone 5-phosphate + H2O = 5-phospho-L-arabinonate + H(+). Functionally, catalyzes the hydrolysis of D-xylono-1,4-lactone-5-phosphate and L-arabino-1,4-lactone-5-phosphate. Also able to hydrolyze carboxy 1,4-lactones. The sequence is that of Phospho-furanose lactonase from Mycoplasmopsis synoviae (strain 53) (Mycoplasma synoviae).